Consider the following 293-residue polypeptide: Extracellular metalloprotease PODANS_2_14170 (293 aa).

An N-terminal signal peptide occupies residues 1–18 (MRFSLALAAAGLAQTAFA). An N-linked (GlcNAc...) asparagine glycan is attached at Asn60. His206 is a Zn(2+) binding site. Glu207 is a catalytic residue. His210 is a binding site for Zn(2+). An intrachain disulfide couples Cys242 to Cys269.

It belongs to the peptidase M43B family.

It localises to the secreted. In terms of biological role, secreted metalloproteinase that allows assimilation of proteinaceous substrates. The polypeptide is Extracellular metalloprotease PODANS_2_14170 (Podospora anserina (strain S / ATCC MYA-4624 / DSM 980 / FGSC 10383) (Pleurage anserina)).